Consider the following 185-residue polypeptide: Orotate phosphoribosyltransferase (185 aa).

5-phospho-alpha-D-ribose 1-diphosphate is bound by residues Arg102, Lys103, Lys106, His108, and 128–136 (DDVITTGGS). 2 residues coordinate orotate: Thr132 and Arg160.

Belongs to the purine/pyrimidine phosphoribosyltransferase family. PyrE subfamily. Homodimer. Mg(2+) is required as a cofactor.

The enzyme catalyses orotidine 5'-phosphate + diphosphate = orotate + 5-phospho-alpha-D-ribose 1-diphosphate. Its pathway is pyrimidine metabolism; UMP biosynthesis via de novo pathway; UMP from orotate: step 1/2. In terms of biological role, catalyzes the transfer of a ribosyl phosphate group from 5-phosphoribose 1-diphosphate to orotate, leading to the formation of orotidine monophosphate (OMP). This chain is Orotate phosphoribosyltransferase, found in Leptospira biflexa serovar Patoc (strain Patoc 1 / Ames).